A 234-amino-acid chain; its full sequence is Glycerol uptake facilitator protein (234 aa).

6 helical membrane-spanning segments follow: residues 9–29, 37–57, 61–81, 83–103, 135–155, and 159–179; these read FLGT…VVLP, GWIV…FVSG, PAHL…LPWA, VLPY…LVWL, LISE…LGLY, and AGIG…SLGG. Positions 65–67 match the NPA 1 motif; sequence NPA. The NPA 2 signature appears at 186–188; that stretch reads NPA. Residues 214 to 234 form a helical membrane-spanning segment; the sequence is WIPVVGPVIGAALAVLVFSLF.

It belongs to the MIP/aquaporin (TC 1.A.8) family.

It is found in the cell membrane. The enzyme catalyses glycerol(in) = glycerol(out). Functionally, mediates glycerol diffusion across the cytoplasmic membrane via a pore-type mechanism. The polypeptide is Glycerol uptake facilitator protein (glpF) (Streptococcus pneumoniae (strain ATCC BAA-255 / R6)).